A 124-amino-acid chain; its full sequence is Small ribosomal subunit protein uS12 (124 aa).

Positions 1-20 (MATISQLVRNPRKDKVQKTS) are disordered. A 3-methylthioaspartic acid modification is found at Asp89. The segment at 104 to 124 (TSGVTARRKGRSKYGAKRPKA) is disordered. The span at 109–124 (ARRKGRSKYGAKRPKA) shows a compositional bias: basic residues.

The protein belongs to the universal ribosomal protein uS12 family. In terms of assembly, part of the 30S ribosomal subunit. Contacts proteins S8 and S17. May interact with IF1 in the 30S initiation complex.

With S4 and S5 plays an important role in translational accuracy. In terms of biological role, interacts with and stabilizes bases of the 16S rRNA that are involved in tRNA selection in the A site and with the mRNA backbone. Located at the interface of the 30S and 50S subunits, it traverses the body of the 30S subunit contacting proteins on the other side and probably holding the rRNA structure together. The combined cluster of proteins S8, S12 and S17 appears to hold together the shoulder and platform of the 30S subunit. The polypeptide is Small ribosomal subunit protein uS12 (Psychromonas ingrahamii (strain DSM 17664 / CCUG 51855 / 37)).